A 370-amino-acid chain; its full sequence is Propane 2-monooxygenase, reductase component (370 aa).

The segment covering 1-14 (MAPRPLRRHPPLHH) has biased composition (basic residues). Residues 1-21 (MAPRPLRRHPPLHHSFHESRR) are disordered. In terms of domain architecture, 2Fe-2S ferredoxin-type spans 28–118 (HRINFEPVDI…DCTIELLNFD (91 aa)). Residues Cys62, Cys67, Cys70, and Cys102 each coordinate [2Fe-2S] cluster. An FAD-binding FR-type domain is found at 128-229 (IQDVRTRVTR…TGPYGSFTIK (102 aa)).

The protein belongs to the TmoA/XamoA family. As to quaternary structure, the propane 2-monooxygenase multicomponent enzyme system is composed of an electron transfer component and a monooxygenase component interacting with the effector protein PrmD. The electron transfer component is composed of a reductase (PrmB), and the monooxygenase component is formed by a large subunit (PrmA) and a small subunit (PrmC). FAD serves as cofactor. Requires [2Fe-2S] cluster as cofactor.

Its function is as follows. Reductase component of the propane 2-monooxygenase multicomponent enzyme system which is involved in the degradation of propane via the O2-dependent hydroxylation of propane. Reductase catalyzes the transfer of electrons from NADH or NADPH to monooxygenase. In Rhodococcus jostii (strain RHA1), this protein is Propane 2-monooxygenase, reductase component.